Reading from the N-terminus, the 38-residue chain is Mu/omega-theraphotoxin-Mb1b (38 aa).

3 disulfide bridges follow: C7-C21, C14-C26, and C20-C33. At S38 the chain carries Serine amide.

This sequence belongs to the neurotoxin 10 (Hwtx-1) family. 28 (Jztx-11) subfamily. In terms of tissue distribution, expressed by the venom gland.

Its subcellular location is the secreted. Paralytic toxin on insects that inhibits voltage-gated sodium (Nav) and calcium (Cav) channels in P.americana (American cockroach) dorsal unpaired median (DUM) neurons, and also inhibits the B.germanica (German cockroach) Nav channel (BgNaV1). May act as a gating-modifier toxin on Nav and as a pore blocker on Cav. In vivo, reversibly paralyzes both L.cuprina (Australian sheep blowfly) and M.domestica (housefly), but does not affect larvae of H.armigera (cotton bollworms). The sequence is that of Mu/omega-theraphotoxin-Mb1b from Monocentropus balfouri (Socotra Island blue baboon tarantula).